Here is a 118-residue protein sequence, read N- to C-terminus: Large ribosomal subunit protein uL18 (118 aa).

Belongs to the universal ribosomal protein uL18 family. In terms of assembly, part of the 50S ribosomal subunit; part of the 5S rRNA/L5/L18/L25 subcomplex. Contacts the 5S and 23S rRNAs.

Its function is as follows. This is one of the proteins that bind and probably mediate the attachment of the 5S RNA into the large ribosomal subunit, where it forms part of the central protuberance. The chain is Large ribosomal subunit protein uL18 from Nitratiruptor sp. (strain SB155-2).